Reading from the N-terminus, the 120-residue chain is MSIKSKNKLRQHRKIRIRKKIFGTADQPRLVIFRSNLHIYAQLVDDITGSTLLTTSTLSLKDNGINIRANKSGSTLVGKEIARLAIEKQIIKIVFDRNGYLYHGRVKAVADGAREGGLKF.

It belongs to the universal ribosomal protein uL18 family. In terms of assembly, part of the 50S ribosomal subunit; part of the 5S rRNA/L5/L18/L25 subcomplex. Contacts the 5S and 23S rRNAs.

Functionally, this is one of the proteins that bind and probably mediate the attachment of the 5S RNA into the large ribosomal subunit, where it forms part of the central protuberance. This is Large ribosomal subunit protein uL18 from Lawsonia intracellularis (strain PHE/MN1-00).